The following is a 918-amino-acid chain: Whirlin (918 aa).

The region spanning 141 to 224 (LVSLRRAKAH…LVLSVYSAGR (84 aa)) is the PDZ 1 domain. Positions 240–266 (PQGRSTSPPSSLPQPHGSTLRQREDDR) are disordered. The region spanning 280–362 (KVNLVLGDGR…LILTVKDVGR (83 aa)) is the PDZ 2 domain. Disordered regions lie at residues 387–407 (NSAGFPGDHTEEGTSKPGFYK), 503–538 (SMKARQPPGPGVGDTYSMVSYSDTGSSTGSHGTSTT), and 560–824 (EGTG…LEPT). The segment covering 522-538 (SYSDTGSSTGSHGTSTT) has biased composition (low complexity). The segment covering 563 to 572 (GETTQGSTNA) has biased composition (polar residues). Pro residues-rich tracts occupy residues 591 to 600 (IKPPPPPPPL) and 638 to 649 (RSPPPGTAPTPG). Positions 654–672 (QDSPSSPIYASISHANPSS) are enriched in polar residues. Serine 696 bears the Phosphoserine mark. Composition is skewed to polar residues over residues 754–773 (QTRTASTLSQLSDSGQTLSE) and 783–798 (EASTSGRGRQTASAKN). Basic and acidic residues predominate over residues 800-811 (NGKEQPRTERTA). The 84-residue stretch at 827–910 (LVRVRKSAAT…TKERDYIDFL (84 aa)) folds into the PDZ 3 domain.

As to quaternary structure, forms homooligomers. Interacts (via C-terminal PDZ domain) with MYO15A; this interaction is necessary for localization of WHRN to stereocilia tips. Interacts (via C-terminal PDZ domain) with MPP1/p55. Interacts with LRRC4C/NGL1. Interacts with MYO7A. Interacts with RPGR. Interacts with EPS8. Interacts with CASK. Interacts with CIB2. Component of USH2 complex, composed of ADGRV1, PDZD7, USH2A and WHRN. Interacts (via PDZ domains) with PDZD7; the interaction is direct. Interacts (via N-terminal PDZ domain) with USH2A (via cytoplasmic region). Interacts with ADGRV1/MASS1 (via cytoplasmic region). In terms of tissue distribution, expressed in the retina. Colocalizes with RPGR in the photoreceptor connecting cilium, a thin bridge linking the cell body and the light-sensing outer segment (at protein level). Detected in the inner ear throughout development from embryonic day 12 to 20 days after birth. Displays a dynamic pattern of expression after birth, demonstrating an ordered appearance and fade-out across stereocilia rows. Isoforms 5, 6, 7 and 8 are not detected in the retina.

It localises to the cytoplasm. The protein localises to the cell projection. It is found in the stereocilium. The protein resides in the growth cone. Its subcellular location is the photoreceptor inner segment. It localises to the synapse. In terms of biological role, involved in hearing and vision as member of the USH2 complex. Necessary for elongation and maintenance of inner and outer hair cell stereocilia in the organ of Corti in the inner ear. Involved in the maintenance of the hair bundle ankle region, which connects stereocilia in cochlear hair cells of the inner ear. In retina photoreceptors, required for the maintenance of periciliary membrane complex that seems to play a role in regulating intracellular protein transport. The chain is Whirlin from Mus musculus (Mouse).